Consider the following 418-residue polypeptide: UDP-N-acetylglucosamine 1-carboxyvinyltransferase (418 aa).

23-24 (KN) is a binding site for phosphoenolpyruvate. Arg92 contacts UDP-N-acetyl-alpha-D-glucosamine. The active-site Proton donor is the Cys116. Cys116 carries the 2-(S-cysteinyl)pyruvic acid O-phosphothioketal modification. Residues 121–125 (RPVDL), 161–164 (KVSV), Asp306, and Ile328 contribute to the UDP-N-acetyl-alpha-D-glucosamine site.

The protein belongs to the EPSP synthase family. MurA subfamily.

It localises to the cytoplasm. It carries out the reaction phosphoenolpyruvate + UDP-N-acetyl-alpha-D-glucosamine = UDP-N-acetyl-3-O-(1-carboxyvinyl)-alpha-D-glucosamine + phosphate. It participates in cell wall biogenesis; peptidoglycan biosynthesis. In terms of biological role, cell wall formation. Adds enolpyruvyl to UDP-N-acetylglucosamine. This chain is UDP-N-acetylglucosamine 1-carboxyvinyltransferase, found in Vibrio parahaemolyticus serotype O3:K6 (strain RIMD 2210633).